The primary structure comprises 320 residues: Aspartate carbamoyltransferase catalytic subunit (320 aa).

Residues R68 and T69 each contribute to the carbamoyl phosphate site. K96 provides a ligand contact to L-aspartate. The carbamoyl phosphate site is built by R118, H148, and Q151. R181 and R236 together coordinate L-aspartate. Residues G277 and P278 each contribute to the carbamoyl phosphate site.

This sequence belongs to the aspartate/ornithine carbamoyltransferase superfamily. ATCase family. In terms of assembly, heterododecamer (2C3:3R2) of six catalytic PyrB chains organized as two trimers (C3), and six regulatory PyrI chains organized as three dimers (R2).

It carries out the reaction carbamoyl phosphate + L-aspartate = N-carbamoyl-L-aspartate + phosphate + H(+). Its pathway is pyrimidine metabolism; UMP biosynthesis via de novo pathway; (S)-dihydroorotate from bicarbonate: step 2/3. Functionally, catalyzes the condensation of carbamoyl phosphate and aspartate to form carbamoyl aspartate and inorganic phosphate, the committed step in the de novo pyrimidine nucleotide biosynthesis pathway. The sequence is that of Aspartate carbamoyltransferase catalytic subunit from Polaromonas naphthalenivorans (strain CJ2).